A 490-amino-acid polypeptide reads, in one-letter code: Glutathione hydrolase 6 (490 aa).

At 1-52 (MEPEAGPVLYQKLRVWEPSLESEEEEEEISEQLILDASGPHDSSGNKAGRLP) the chain is on the cytoplasmic side. A helical; Signal-anchor for type II membrane protein membrane pass occupies residues 53-73 (GAWAQLVAALLLLAIGFSLAV). The Extracellular portion of the chain corresponds to 74–490 (RQLCSSGASP…PSGCCPFQGF (417 aa)). N-linked (GlcNAc...) asparagine glycosylation is found at N160, N165, and N374.

Belongs to the gamma-glutamyltransferase family. As to quaternary structure, heterodimer composed of the light and heavy chains. The active site is located in the light chain. In terms of processing, cleaved by autocatalysis into a large and a small subunit and the autocatalytic cleavage is essential to the functional activation of the enzyme.

The protein localises to the membrane. It catalyses the reaction an N-terminal (5-L-glutamyl)-[peptide] + an alpha-amino acid = 5-L-glutamyl amino acid + an N-terminal L-alpha-aminoacyl-[peptide]. The enzyme catalyses glutathione + H2O = L-cysteinylglycine + L-glutamate. It carries out the reaction an S-substituted glutathione + H2O = an S-substituted L-cysteinylglycine + L-glutamate. Its pathway is sulfur metabolism; glutathione metabolism. Hydrolyzes and transfers gamma-glutamyl moieties from glutathione and other gamma-glutamyl compounds to acceptors. This chain is Glutathione hydrolase 6, found in Bos taurus (Bovine).